The chain runs to 120 residues: Large ribosomal subunit protein bL17 (120 aa).

It belongs to the bacterial ribosomal protein bL17 family. Part of the 50S ribosomal subunit. Contacts protein L32.

In Geobacillus kaustophilus (strain HTA426), this protein is Large ribosomal subunit protein bL17.